Reading from the N-terminus, the 60-residue chain is Cytotoxin 1 (60 aa).

Intrachain disulfides connect cysteine 3–cysteine 21, cysteine 14–cysteine 38, cysteine 42–cysteine 53, and cysteine 54–cysteine 59.

The protein belongs to the three-finger toxin family. Short-chain subfamily. Type IA cytotoxin sub-subfamily. Monomer in solution; Homodimer and oligomer in the presence of negatively charged lipids forming a pore with a size ranging between 20 and 30 Angstroms. Expressed by the venom gland.

The protein localises to the secreted. It localises to the target cell membrane. Functionally, produces complete blockade of auricular contraction, which is irreversible at high concentrations. Induces apoptosis in leukemic cells. Possesses anti-arthritic and anti-inflammatory potential. This Naja kaouthia (Monocled cobra) protein is Cytotoxin 1.